The chain runs to 205 residues: SREBP regulating gene protein (205 aa).

Topologically, residues 1–16 (MLNLAALLWRRLLRKR) are cytoplasmic. A helical membrane pass occupies residues 17 to 35 (WVLALVFGLSLVYFLSSTF). The Lumenal portion of the chain corresponds to 36-205 (KQEERAVRDR…GESPPELFPA (170 aa)). Asn67 carries an N-linked (GlcNAc...) asparagine glycan.

Belongs to the SPRING family. As to quaternary structure, interacts with SCAP. Ubiquitously expressed with a slightly higher expression in the liver and kidney.

The protein resides in the golgi apparatus membrane. Its function is as follows. Positively regulates hepatic SREBP signaling pathway by modulating the proper localization of SCAP (SREBP cleavage-activating protein) to the endoplasmic reticulum, thereby controlling the level of functional SCAP. Plays a crucial role during embryogenesis. In Mus musculus (Mouse), this protein is SREBP regulating gene protein (Spring1).